The sequence spans 488 residues: Cytochrome P450 71A24 (488 aa).

A helical transmembrane segment spans residues 3 to 23 (MMMMIILLLCSIILITILFFK). Position 433 (Cys433) interacts with heme.

This sequence belongs to the cytochrome P450 family. Heme serves as cofactor.

The protein resides in the membrane. In Arabidopsis thaliana (Mouse-ear cress), this protein is Cytochrome P450 71A24 (CYP71A24).